We begin with the raw amino-acid sequence, 234 residues long: 2-C-methyl-D-erythritol 4-phosphate cytidylyltransferase (234 aa).

Belongs to the IspD/TarI cytidylyltransferase family. IspD subfamily.

It catalyses the reaction 2-C-methyl-D-erythritol 4-phosphate + CTP + H(+) = 4-CDP-2-C-methyl-D-erythritol + diphosphate. The protein operates within isoprenoid biosynthesis; isopentenyl diphosphate biosynthesis via DXP pathway; isopentenyl diphosphate from 1-deoxy-D-xylulose 5-phosphate: step 2/6. Catalyzes the formation of 4-diphosphocytidyl-2-C-methyl-D-erythritol from CTP and 2-C-methyl-D-erythritol 4-phosphate (MEP). The protein is 2-C-methyl-D-erythritol 4-phosphate cytidylyltransferase of Pseudomonas aeruginosa (strain UCBPP-PA14).